The chain runs to 489 residues: MIKLFNTLSKKVEVFKPIDDVVKIYCCGVTVYDLCHLGHARSYIAWDVLRRFLIYSDFKVKYVQNFTDIDDKILKRAKEESSSMKEVSEKNIIEFHKDMDSLGIMRPDSMPRATNHICNICSFITILEDKGYAYSRDGDVYYSVFKNKNYGKLSNQNLQEQNINQQGRMVNEENSKKLNPQDFALWKKAKDDEPFFDSPWGKGRPGWHIECSAMVKDELGDTIDIHLGGSDLIFPHHENEIAQSEAANGKKLANYWLHNGMVNVNGQKMSKSLKNFKTIRELIKSGISPMTLRYFVMTVNYRKPLDFTEEALRSASEAWKNINVALSFMDLTKGAFISIDKNESIEEKYKEKISFELSQKKLKFSEALGNDLNTAGAIAIIYDLAKPLKNFLNQFQRVEGFTVELNEKFFLLENFKTLEKLTEVLGLKKEVLVKESKIKEEEISSLINERLKAKMEKNYAKADEIRNLLKEKGIELIDQSKEITTWIRV.

Cys-27 lines the Zn(2+) pocket. Positions 29–39 match the 'HIGH' region motif; it reads VTVYDLCHLGH. Zn(2+)-binding residues include Cys-211, His-236, and Glu-240. Residues 268–272 carry the 'KMSKS' region motif; sequence KMSKS. Residue Lys-271 participates in ATP binding.

The protein belongs to the class-I aminoacyl-tRNA synthetase family. Monomer. The cofactor is Zn(2+).

It localises to the cytoplasm. It carries out the reaction tRNA(Cys) + L-cysteine + ATP = L-cysteinyl-tRNA(Cys) + AMP + diphosphate. This chain is Cysteine--tRNA ligase, found in Prochlorococcus marinus (strain AS9601).